Consider the following 115-residue polypeptide: Na(+)/H(+) antiporter subunit C1 (115 aa).

Transmembrane regions (helical) follow at residues 1-21 (MEII…YLVL), 28-48 (IIMG…TMGG), and 72-92 (LILT…VLAF).

Belongs to the CPA3 antiporters (TC 2.A.63) subunit C family. In terms of assembly, may form a heterooligomeric complex that consists of seven subunits: mnhA1, mnhB1, mnhC1, mnhD1, mnhE1, mnhF1 and mnhG1.

It localises to the cell membrane. In terms of biological role, mnh complex is a Na(+)/H(+) antiporter involved in Na(+) excretion. This chain is Na(+)/H(+) antiporter subunit C1 (mnhC1), found in Staphylococcus epidermidis (strain ATCC 35984 / DSM 28319 / BCRC 17069 / CCUG 31568 / BM 3577 / RP62A).